The primary structure comprises 36 residues: Photosystem I reaction center subunit VIII (36 aa).

The helical transmembrane segment at 6–28 (LPSIFVPLVGLLFPAIAMVSLFF) threads the bilayer.

It belongs to the PsaI family.

The protein localises to the plastid. The protein resides in the chloroplast thylakoid membrane. May help in the organization of the PsaL subunit. The chain is Photosystem I reaction center subunit VIII from Nymphaea alba (White water-lily).